The chain runs to 185 residues: Elongation factor P (185 aa).

Belongs to the elongation factor P family.

Its subcellular location is the cytoplasm. It participates in protein biosynthesis; polypeptide chain elongation. Involved in peptide bond synthesis. Stimulates efficient translation and peptide-bond synthesis on native or reconstituted 70S ribosomes in vitro. Probably functions indirectly by altering the affinity of the ribosome for aminoacyl-tRNA, thus increasing their reactivity as acceptors for peptidyl transferase. The sequence is that of Elongation factor P from Bacillus cereus (strain ATCC 10987 / NRS 248).